A 178-amino-acid chain; its full sequence is Large ribosomal subunit protein uL6 (178 aa).

Belongs to the universal ribosomal protein uL6 family. In terms of assembly, part of the 50S ribosomal subunit.

This protein binds to the 23S rRNA, and is important in its secondary structure. It is located near the subunit interface in the base of the L7/L12 stalk, and near the tRNA binding site of the peptidyltransferase center. In Francisella philomiragia subsp. philomiragia (strain ATCC 25017 / CCUG 19701 / FSC 153 / O#319-036), this protein is Large ribosomal subunit protein uL6.